The sequence spans 40 residues: Beta/delta-ctenitoxin-Pr1a (40 aa).

4 disulfides stabilise this stretch: cysteine 1/cysteine 15, cysteine 8/cysteine 21, cysteine 14/cysteine 31, and cysteine 23/cysteine 29.

Belongs to the neurotoxin 03 (Tx2) family. 05 subfamily. In terms of tissue distribution, expressed by the venom gland.

The protein localises to the secreted. Functionally, potent insecticidal toxin that binds to two distinct sites in insect sodium channels, with close affinity (Kd1=34.7 pM and Kd2=35.1 pM). Its association is rather fast (1.4 and 8.5 minutes, respectively for sites 1 and 2) and its dissociation is a slower process (5.4 and 32.8 minutes, respectively). On rat brain synaptosomes the toxin partially competes (~30%) with the beta-toxin CssIV, but does not compete with the alpha-toxin AaII, nor with the beta-toxin Ts VII. On cockroach nerve cord synaptosomes, the toxin does not compete with the anti-insect toxin LqqIT1, but it competes with the 'alpha-like' toxin BomIV (IC(50)=80 pM). In cockroach neurons, the toxin inhibits the inactivation of sodium channels and it shifts the sodium channel activation to hyperpolarizing potentials. Hence, it behaves like an 'alpha-like' toxin and binds preferentially to site 3 on the insect Nav channel, located on the domain IV. The toxin may also inhibit the N-methyl-D-aspartate (NMDA)-subtype of ionotropic glutamate receptor (GRIN). In vivo, the toxin causes excitatory effects on insects. The sequence is that of Beta/delta-ctenitoxin-Pr1a from Phoneutria reidyi (Brazilian Amazonian armed spider).